The following is a 466-amino-acid chain: ATP synthase subunit beta (466 aa).

155-162 (GGAGVGKT) serves as a coordination point for ATP.

The protein belongs to the ATPase alpha/beta chains family. F-type ATPases have 2 components, CF(1) - the catalytic core - and CF(0) - the membrane proton channel. CF(1) has five subunits: alpha(3), beta(3), gamma(1), delta(1), epsilon(1). CF(0) has three main subunits: a(1), b(2) and c(9-12). The alpha and beta chains form an alternating ring which encloses part of the gamma chain. CF(1) is attached to CF(0) by a central stalk formed by the gamma and epsilon chains, while a peripheral stalk is formed by the delta and b chains.

It is found in the cell inner membrane. The enzyme catalyses ATP + H2O + 4 H(+)(in) = ADP + phosphate + 5 H(+)(out). In terms of biological role, produces ATP from ADP in the presence of a proton gradient across the membrane. The catalytic sites are hosted primarily by the beta subunits. This is ATP synthase subunit beta from Aromatoleum aromaticum (strain DSM 19018 / LMG 30748 / EbN1) (Azoarcus sp. (strain EbN1)).